The primary structure comprises 317 residues: Mitochondrial thiamine pyrophosphate carrier 1 (317 aa).

The next 6 helical transmembrane spans lie at 21 to 41 (AVSG…ARSV), 86 to 106 (VPAS…YAWL), 122 to 142 (LAVG…LDLL), 176 to 196 (GGAW…GIYE), 207 to 227 (LPWL…AAVF), and 281 to 300 (GLTM…LWVY). Solcar repeat units lie at residues 22–109 (VSGL…LNTA), 116–201 (PPQA…CTIA), and 206–306 (GLPW…CLRL).

The protein belongs to the mitochondrial carrier (TC 2.A.29) family.

It is found in the mitochondrion inner membrane. In terms of biological role, mitochondrial transporter that mediates uptake of thiamine pyrophosphate (ThPP) into mitochondria. In Eremothecium gossypii (strain ATCC 10895 / CBS 109.51 / FGSC 9923 / NRRL Y-1056) (Yeast), this protein is Mitochondrial thiamine pyrophosphate carrier 1 (TPC1).